Consider the following 145-residue polypeptide: Ribonuclease H (145 aa).

The RNase H type-1 domain maps to 1–142 (MDTPVYLYTD…ADDLANRGAA (142 aa)). Mg(2+) is bound by residues D10, E48, D70, and D134.

This sequence belongs to the RNase H family. Monomer. It depends on Mg(2+) as a cofactor.

The protein resides in the cytoplasm. It carries out the reaction Endonucleolytic cleavage to 5'-phosphomonoester.. In terms of biological role, endonuclease that specifically degrades the RNA of RNA-DNA hybrids. The polypeptide is Ribonuclease H (Neisseria gonorrhoeae (strain ATCC 700825 / FA 1090)).